Consider the following 1091-residue polypeptide: Ubiquitin carboxyl-terminal hydrolase 36 (1091 aa).

The disordered stretch occupies residues 115–152 (ANGHDNNGRKLSDHPNQNHNHANPNGHHANPNELPKPK). The span at 128 to 146 (HPNQNHNHANPNGHHANPN) shows a compositional bias: low complexity. Residues 176–484 (SGMINAGNTC…NAYIMFYELD (309 aa)) form the USP domain. The active-site Nucleophile is Cys185. His443 (proton acceptor) is an active-site residue. A phosphoserine mark is found at Ser518 and Ser522. Disordered regions lie at residues 523-572 (PAKF…KSPL), 594-892 (PTAN…ELLK), 972-1007 (QRDL…GYNP), and 1068-1091 (LAAG…QQQS). The segment covering 547 to 572 (TTIQFKPQHQPSHQQNGVQQSAKSPL) has biased composition (polar residues). Residues 594–612 (PTANGNKSSSNHSNHKSVN) show a composition bias toward low complexity. Over residues 643–652 (KMDDCMDSGK) the composition is skewed to basic and acidic residues. Residues 653 to 667 (PKSPVKTPVKTPLKS) show a composition bias toward low complexity. Thr659 and Thr663 each carry phosphothreonine. Phosphoserine is present on residues Ser673 and Ser675. The segment covering 691-702 (RSSDSSDSEHEP) has biased composition (basic and acidic residues). The span at 703–727 (TTSSVQLNGHSKTNGSLSNGSSKST) shows a compositional bias: polar residues. The residue at position 749 (Ser749) is a Phosphoserine. Residues 749–759 (SEDDDDDEDEP) are compositionally biased toward acidic residues. Positions 769 to 780 (PQKQSQSQSRSG) are enriched in low complexity. Positions 781–790 (PPSPKTPPSP) are enriched in pro residues. Residue Ser783 is modified to Phosphoserine. Thr786 carries the phosphothreonine modification. Ser789 is subject to Phosphoserine. Positions 806 to 821 (DGDDDEDDDDDDDEVV) are enriched in acidic residues. At Thr829 the chain carries Phosphothreonine. Composition is skewed to polar residues over residues 838-850 (FASS…SPTT) and 863-886 (AIKT…NGGT). Ser847 carries the phosphoserine modification. Residue Thr850 is modified to Phosphothreonine.

Belongs to the peptidase C19 family. In terms of assembly, interacts with atms/PAF1, but not with CycT.

The protein resides in the nucleus. It localises to the nucleolus. It catalyses the reaction Thiol-dependent hydrolysis of ester, thioester, amide, peptide and isopeptide bonds formed by the C-terminal Gly of ubiquitin (a 76-residue protein attached to proteins as an intracellular targeting signal).. Functionally, required for maintaining multiple types of adult stem cells, including male and female germline, epithelial follicle cell and intestinal stem cells. May function as a transcriptional repressor by continually deubiquiting histone H2B at the promoters of genes critical for cellular differentiation, thereby preventing histone H3 'Lys-4' trimethylation (H3K4). Controls selective autophagy activation by ubiquitinated proteins. This is Ubiquitin carboxyl-terminal hydrolase 36 (Usp36) from Drosophila ananassae (Fruit fly).